We begin with the raw amino-acid sequence, 397 residues long: Serpin B10 (397 aa).

Positions 74–77 match the Nuclear localization signal motif; the sequence is KKRK.

The protein belongs to the serpin family. Ov-serpin subfamily. In terms of tissue distribution, expressed in many tissues, including brain, heart, kidney, liver, lung, prostate, skin, spleen and stomach.

It localises to the nucleus. Its subcellular location is the cytoplasm. Functionally, protease inhibitor that may play a role in the regulation of protease activities during hematopoiesis and apoptosis induced by TNF. May regulate protease activities in the cytoplasm and in the nucleus. Inhibits plasmin. In Rattus norvegicus (Rat), this protein is Serpin B10 (Serpinb10).